An 834-amino-acid chain; its full sequence is MFNKDEIIVPKNLEEEMKESYLRYSMSVIISRALPDIRDGLKPSQRRVLYAMKQLSLSPGAKHRKCAKICGDTSGDYHPHGESVIYPTLVRMAQNWAMRYPLVDGQGNFGSIDGDPPAAMRYTEARLTHSAMYLMEDLDKDTVDIVPNYDETKHEPVVFPSKFPNLLCNGSSGIAVGMATNIPPHNLGELIEATLLLLANPQASVDEILQVMPGPDFPTGGIICGSEGIRSTYTTGRGKIKVRARLHVEENEDKHRESIIITEMPYNVNKSRLIEQIANLVNEKTLAGISDVRDESDKDGIRVVLEIKKGESSEIIINRLYKFTDVQVTFGANMLALDKNLPRTMSIHRMISAWIRHRKEVIRRRTRYELNKAETRAHVLEGYLKALSCLDALVKTIRESGNKEHAKERIIESFGFTEPQALAILELRLYQLTGLEAEKIQKEYEELLNKIAYYKQVLSDEGLVKDIIRNELQDLLKHHKVARRTTIEFDADDIRDIEDIITNESVIITISGDDYVKRMPVKVFKEQRRGGHGVTGFDMKKGAGFLKAVYSAFTKDYLLIFTNFGQCYWLKVWQLPEGERRAKGKPIINFLEGIRPGEELAAILNIKNFDNAGFLFLATKRGVVKKVSLDAFSNPRKKGIRALEIDEGDELIAACHIVSDEEKVMLFTHLGMAVRFPHEKVRPMGRTARGVRGVSLKNEEDKVVSCQIVTENQSVLIVCDQGFGKRSLVEDFRETNRGGVGVRSILINERNGNVLGAIPVTDHDSILLMSSQGQAIRINMQDVRVMGRSTQGVRLVHLKEGDALVSMEKLSSNENDDEVLSGSEEECSDTVSLR.

Positions 34 to 500 (LPDIRDGLKP…ADDIRDIEDI (467 aa)) constitute a Topo IIA-type catalytic domain. The O-(5'-phospho-DNA)-tyrosine intermediate role is filled by tyrosine 122. The short motif at 527–533 (QRRGGHG) is the GyrA-box element. Residues 810-834 (LSSNENDDEVLSGSEEECSDTVSLR) form a disordered region. Positions 814 to 828 (ENDDEVLSGSEEECS) are enriched in acidic residues.

This sequence belongs to the type II topoisomerase GyrA/ParC subunit family. In terms of assembly, heterotetramer, composed of two GyrA and two GyrB chains. In the heterotetramer, GyrA contains the active site tyrosine that forms a transient covalent intermediate with DNA, while GyrB binds cofactors and catalyzes ATP hydrolysis.

It localises to the cytoplasm. The enzyme catalyses ATP-dependent breakage, passage and rejoining of double-stranded DNA.. A type II topoisomerase that negatively supercoils closed circular double-stranded (ds) DNA in an ATP-dependent manner to modulate DNA topology and maintain chromosomes in an underwound state. Negative supercoiling favors strand separation, and DNA replication, transcription, recombination and repair, all of which involve strand separation. Also able to catalyze the interconversion of other topological isomers of dsDNA rings, including catenanes and knotted rings. Type II topoisomerases break and join 2 DNA strands simultaneously in an ATP-dependent manner. This Chlamydia pneumoniae (Chlamydophila pneumoniae) protein is DNA gyrase subunit A.